The primary structure comprises 609 residues: Zinc metalloproteinase-disintegrin-like (609 aa).

Positions 1 to 20 (MIQVLLVTICLAALPYQGSS) are cleaved as a signal peptide. The propeptide occupies 21–189 (IILESGNVND…KKASQLVVTA (169 aa)). A Peptidase M12B domain is found at 198-393 (RFVELVLVVD…QNPECIVNEP (196 aa)). Residues E201 and D285 each contribute to the Ca(2+) site. Disulfide bonds link C308–C388, C348–C372, and C350–C355. H333 contacts Zn(2+). E334 is an active-site residue. Zn(2+) contacts are provided by H337 and H343. N371 is a glycosylation site (N-linked (GlcNAc...) asparagine). Positions 388, 391, 403, 406, 408, 410, 413, and 416 each coordinate Ca(2+). A Disintegrin domain is found at 401-487 (PPVCGNELLE…ECPADVFHKN (87 aa)). 14 cysteine pairs are disulfide-bonded: C404/C433, C415/C428, C417/C423, C427/C450, C441/C447, C446/C472, C459/C479, C466/C498, C491/C503, C510/C560, C525/C571, C538/C548, C555/C597, and C591/C602. Residues 465 to 467 (ECD) carry the D/ECD-tripeptide motif. D467, P468, E470, D482, and V483 together coordinate Ca(2+).

It belongs to the venom metalloproteinase (M12B) family. P-III subfamily. P-IIIa sub-subfamily. Monomer. It depends on Zn(2+) as a cofactor. Expressed by the venom gland.

Its subcellular location is the secreted. Functionally, this protein is a zinc metalloprotease from snake venom that possesses hemorrhagic activity. The sequence is that of Zinc metalloproteinase-disintegrin-like from Crotalus durissus durissus (Central American rattlesnake).